A 299-amino-acid chain; its full sequence is Tyrosine recombinase XerC (299 aa).

One can recognise a Core-binding (CB) domain in the interval 2–88 (SALQPLIDTY…ALRSFLDYLV (87 aa)). One can recognise a Tyr recombinase domain in the interval 109-289 (PLPKNVSVDD…DFQHLSKIYD (181 aa)). Residues Arg148, Lys172, His241, Arg244, and His267 contribute to the active site. Tyr276 serves as the catalytic O-(3'-phospho-DNA)-tyrosine intermediate.

The protein belongs to the 'phage' integrase family. XerC subfamily. As to quaternary structure, forms a cyclic heterotetrameric complex composed of two molecules of XerC and two molecules of XerD.

The protein localises to the cytoplasm. In terms of biological role, site-specific tyrosine recombinase, which acts by catalyzing the cutting and rejoining of the recombining DNA molecules. The XerC-XerD complex is essential to convert dimers of the bacterial chromosome into monomers to permit their segregation at cell division. It also contributes to the segregational stability of plasmids. The sequence is that of Tyrosine recombinase XerC from Psychromonas ingrahamii (strain DSM 17664 / CCUG 51855 / 37).